Here is a 162-residue protein sequence, read N- to C-terminus: SsrA-binding protein (162 aa).

It belongs to the SmpB family.

The protein localises to the cytoplasm. Its function is as follows. Required for rescue of stalled ribosomes mediated by trans-translation. Binds to transfer-messenger RNA (tmRNA), required for stable association of tmRNA with ribosomes. tmRNA and SmpB together mimic tRNA shape, replacing the anticodon stem-loop with SmpB. tmRNA is encoded by the ssrA gene; the 2 termini fold to resemble tRNA(Ala) and it encodes a 'tag peptide', a short internal open reading frame. During trans-translation Ala-aminoacylated tmRNA acts like a tRNA, entering the A-site of stalled ribosomes, displacing the stalled mRNA. The ribosome then switches to translate the ORF on the tmRNA; the nascent peptide is terminated with the 'tag peptide' encoded by the tmRNA and targeted for degradation. The ribosome is freed to recommence translation, which seems to be the essential function of trans-translation. The polypeptide is SsrA-binding protein (Colwellia psychrerythraea (strain 34H / ATCC BAA-681) (Vibrio psychroerythus)).